Reading from the N-terminus, the 329-residue chain is MQDFLQLTLSGGQPEQKEGRNGLLRWRWLNVGILELTPLHSVPRALVVSSGIHGNETAPVEIVEQLVNALLRGELALQARLLVIYGNPAALRLNRRYVHGDMNRMFGGRWQQYEDCPEARRAWILEQAMDNFWQAGDYEEVRWHLDLHTAIRGSYHAQFGVLPQRMTPWPEDFMHWLASAGLEALVFHRATGGTFTNYSSRHFQAASCTLELGTALPFGHNDLTQFAAVRLALRQLIAGGENIPAAAQPRRYRVSQQITRRSDRFVLHMSDEVLNFTAFPQGTLLAEDGEDRVYVQQAREYVLFPNPNVATGLRAGLMLVEDNVHNKAL.

Zn(2+) contacts are provided by histidine 53, glutamate 56, and histidine 148. Glutamate 211 is a catalytic residue.

This sequence belongs to the AspA/AstE family. Succinylglutamate desuccinylase subfamily. It depends on Zn(2+) as a cofactor.

It catalyses the reaction N-succinyl-L-glutamate + H2O = L-glutamate + succinate. Its pathway is amino-acid degradation; L-arginine degradation via AST pathway; L-glutamate and succinate from L-arginine: step 5/5. In terms of biological role, transforms N(2)-succinylglutamate into succinate and glutamate. This chain is Succinylglutamate desuccinylase, found in Erwinia tasmaniensis (strain DSM 17950 / CFBP 7177 / CIP 109463 / NCPPB 4357 / Et1/99).